The primary structure comprises 112 residues: Large ribosomal subunit protein P2-B (112 aa).

A disordered region spans residues A89–D112.

The protein belongs to the eukaryotic ribosomal protein P1/P2 family. P1 and P2 exist as dimers at the large ribosomal subunit. In terms of processing, phosphorylated.

Plays an important role in the elongation step of protein synthesis. This is Large ribosomal subunit protein P2-B from Trypanosoma cruzi.